The sequence spans 612 residues: Alpha-glycerophosphate oxidase (612 aa).

21 to 49 (DLLIIGGGITGAGVALQAAASGLDTGLIE) is a binding site for FAD. The segment covering 398-408 (VETSTSEKELD) has biased composition (basic and acidic residues). Positions 398–418 (VETSTSEKELDPSAVSRGSSF) are disordered.

Belongs to the FAD-dependent glycerol-3-phosphate dehydrogenase family. It depends on FAD as a cofactor.

It localises to the cytoplasm. It carries out the reaction sn-glycerol 3-phosphate + O2 = dihydroxyacetone phosphate + H2O2. The sequence is that of Alpha-glycerophosphate oxidase (glpO) from Streptococcus pyogenes serotype M3 (strain ATCC BAA-595 / MGAS315).